Consider the following 316-residue polypeptide: tRNA dimethylallyltransferase (316 aa).

Residue 17–24 participates in ATP binding; it reads GPTASGKT. 19–24 is a binding site for substrate; the sequence is TASGKT. 3 interaction with substrate tRNA regions span residues 42–45, 166–170, and 247–252; these read DSAL, QRLSR, and RCVGYR.

It belongs to the IPP transferase family. In terms of assembly, monomer. Mg(2+) is required as a cofactor.

It catalyses the reaction adenosine(37) in tRNA + dimethylallyl diphosphate = N(6)-dimethylallyladenosine(37) in tRNA + diphosphate. Functionally, catalyzes the transfer of a dimethylallyl group onto the adenine at position 37 in tRNAs that read codons beginning with uridine, leading to the formation of N6-(dimethylallyl)adenosine (i(6)A). The polypeptide is tRNA dimethylallyltransferase (Klebsiella pneumoniae (strain 342)).